A 144-amino-acid chain; its full sequence is Large ribosomal subunit protein uL11 (144 aa).

The protein belongs to the universal ribosomal protein uL11 family. As to quaternary structure, part of the ribosomal stalk of the 50S ribosomal subunit. Interacts with L10 and the large rRNA to form the base of the stalk. L10 forms an elongated spine to which L12 dimers bind in a sequential fashion forming a multimeric L10(L12)X complex. Post-translationally, one or more lysine residues are methylated.

Forms part of the ribosomal stalk which helps the ribosome interact with GTP-bound translation factors. The polypeptide is Large ribosomal subunit protein uL11 (Gluconobacter oxydans (strain 621H) (Gluconobacter suboxydans)).